Consider the following 449-residue polypeptide: Aspartate aminotransferase 3, chloroplastic (449 aa).

Residues 1-43 constitute a chloroplast transit peptide; the sequence is MKTTHFSSSSSSDRRIGALLRHLNSGSDSDNLSSLYASPTSGG. Glycine 81, tryptophan 178, and asparagine 231 together coordinate L-aspartate. The residue at position 295 (lysine 295) is an N6-(pyridoxal phosphate)lysine. Arginine 423 contributes to the L-aspartate binding site.

This sequence belongs to the class-I pyridoxal-phosphate-dependent aminotransferase family. In terms of assembly, homodimer. It depends on pyridoxal 5'-phosphate as a cofactor. Expressed in roots, cauline leaves, flowers, hypocotyl epidermis and root hair cells.

The protein localises to the plastid. The protein resides in the chloroplast. The enzyme catalyses L-aspartate + 2-oxoglutarate = oxaloacetate + L-glutamate. Functionally, amino acid aminotransferase important for the metabolism of amino acids and Krebs-cycle related organic acids. No activity with D-Asp or D-Ala as amino donors. In plants, it is involved in nitrogen metabolism and in aspects of carbon and energy metabolism. This Arabidopsis thaliana (Mouse-ear cress) protein is Aspartate aminotransferase 3, chloroplastic (ASP3).